The chain runs to 382 residues: Biotin synthase (382 aa).

Residues 83 to 318 (CCGNVVDLCS…EQILRYAGGR (236 aa)) enclose the Radical SAM core domain. [4Fe-4S] cluster-binding residues include Cys-101, Cys-105, and Cys-108. Cys-146, Cys-183, Cys-243, and Arg-313 together coordinate [2Fe-2S] cluster.

This sequence belongs to the radical SAM superfamily. Biotin synthase family. Homodimer. Requires [4Fe-4S] cluster as cofactor. It depends on [2Fe-2S] cluster as a cofactor.

It catalyses the reaction (4R,5S)-dethiobiotin + (sulfur carrier)-SH + 2 reduced [2Fe-2S]-[ferredoxin] + 2 S-adenosyl-L-methionine = (sulfur carrier)-H + biotin + 2 5'-deoxyadenosine + 2 L-methionine + 2 oxidized [2Fe-2S]-[ferredoxin]. It participates in cofactor biosynthesis; biotin biosynthesis; biotin from 7,8-diaminononanoate: step 2/2. Functionally, catalyzes the conversion of dethiobiotin (DTB) to biotin by the insertion of a sulfur atom into dethiobiotin via a radical-based mechanism. This is Biotin synthase from Crocosphaera subtropica (strain ATCC 51142 / BH68) (Cyanothece sp. (strain ATCC 51142)).